Here is a 130-residue protein sequence, read N- to C-terminus: Small ribosomal subunit protein uS8 (130 aa).

This sequence belongs to the universal ribosomal protein uS8 family. Part of the 30S ribosomal subunit. Contacts proteins S5 and S12.

Functionally, one of the primary rRNA binding proteins, it binds directly to 16S rRNA central domain where it helps coordinate assembly of the platform of the 30S subunit. This chain is Small ribosomal subunit protein uS8, found in Shewanella loihica (strain ATCC BAA-1088 / PV-4).